Here is a 386-residue protein sequence, read N- to C-terminus: Magnesium transporter MRS2-7 (386 aa).

The next 2 membrane-spanning stretches (helical) occupy residues 321–341 (LMLS…GIFG) and 355–375 (IFKW…VIIL). Positions 341-343 (GMN) match the Required for magnesium transport activity motif.

Belongs to the CorA metal ion transporter (MIT) (TC 1.A.35.5) family. Isoform 1 is expressed in the whole plant. Isoform 4 is expressed only in roots and flowers.

The protein resides in the endoplasmic reticulum membrane. Its function is as follows. Low-affinity magnesium transporter that mediates the influx of magnesium. The sequence is that of Magnesium transporter MRS2-7 (MRS2-7) from Arabidopsis thaliana (Mouse-ear cress).